The chain runs to 639 residues: Threonine--tRNA ligase (639 aa).

The TGS domain occupies Met1–Thr62. Positions Asp246–Pro537 are catalytic. Zn(2+)-binding residues include Cys337, His388, and His514.

It belongs to the class-II aminoacyl-tRNA synthetase family. Homodimer. The cofactor is Zn(2+).

The protein localises to the cytoplasm. It catalyses the reaction tRNA(Thr) + L-threonine + ATP = L-threonyl-tRNA(Thr) + AMP + diphosphate + H(+). In terms of biological role, catalyzes the attachment of threonine to tRNA(Thr) in a two-step reaction: L-threonine is first activated by ATP to form Thr-AMP and then transferred to the acceptor end of tRNA(Thr). Also edits incorrectly charged L-seryl-tRNA(Thr). This is Threonine--tRNA ligase from Leptospira borgpetersenii serovar Hardjo-bovis (strain JB197).